Reading from the N-terminus, the 384-residue chain is Autophagy-related protein 30 (384 aa).

Residues 1–63 (MFSRKQVQKR…ASPGQLRPRT (63 aa)) are disordered. The segment covering 13-27 (ELSSLHCSNSSNSLN) has biased composition (low complexity). Over residues 45–63 (RGNNRSDNVASPGQLRPRT) the composition is skewed to polar residues. Ser112 is modified (phosphoserine). Residues 266–291 (VKHDKPSSPLPNYHNTLKQAPSSNSQ) are disordered. Residues 278-291 (YHNTLKQAPSSNSQ) are compositionally biased toward polar residues.

As to quaternary structure, interacts with ATG11, ATG17, ATG37, PEX3 and PEX14. Phosphorylation at Ser-112 is required for micro- and macropexophagy.

The protein localises to the vacuole lumen. It is found in the preautophagosomal structure. Its subcellular location is the peroxisome membrane. Functionally, acts as the peroxisome receptor for pexophagy. Required for both micropexophagy and macropexophagy, but not for the cytoplasm to vacuole transport (Cvt) or autophagy pathways. Required for functional micropexophagic apparatus (MIPA) and relocation of ATG11 to the peroxisome-sequestering arms of the vacuole. The sequence is that of Autophagy-related protein 30 (ATG30) from Komagataella phaffii (strain GS115 / ATCC 20864) (Yeast).